The following is a 435-amino-acid chain: Casein kinase 1-like protein 12 (435 aa).

Residues 9 to 278 enclose the Protein kinase domain; sequence YRLGRKIGSG…LKRIFRDLFI (270 aa). ATP is bound by residues 15–23 and Lys38; that span reads IGSGSFGEI. The active-site Proton acceptor is the Asp128. 2 disordered regions span residues 313–363 and 394–414; these read VGTS…RGPM and LRNSPVVTTPEGKRSSSTRKH.

This sequence belongs to the protein kinase superfamily. CK1 Ser/Thr protein kinase family. Casein kinase I subfamily. In terms of assembly, monomer. Post-translationally, autophosphorylated.

It is found in the cytoplasm. The catalysed reaction is L-seryl-[protein] + ATP = O-phospho-L-seryl-[protein] + ADP + H(+). It carries out the reaction L-threonyl-[protein] + ATP = O-phospho-L-threonyl-[protein] + ADP + H(+). Its function is as follows. Casein kinases are operationally defined by their preferential utilization of acidic proteins such as caseins as substrates. It can phosphorylate a large number of proteins. This Arabidopsis thaliana (Mouse-ear cress) protein is Casein kinase 1-like protein 12.